The sequence spans 197 residues: MKLLEDRIHSDGQVLGQDILKVDRFLTHQVDYQLMKEIGKRFAQVYADAEVTKVVTIEASGIAPALYAAESLNVPMIFAKKAKNVTMNDDLLITEVYSFTKKLTSTVQISSKLIEEGDKVLIIDDFLANGQAALGLVHLMEQAKAEVVGLGMVIEKSFQDGRQKLLDQGMKLTSIARIEKFEDGKVIFAPADDIAFD.

Positions 20 and 27 each coordinate xanthine. Residue 128–132 (ANGQA) coordinates 5-phospho-alpha-D-ribose 1-diphosphate. Lys-156 lines the xanthine pocket.

It belongs to the purine/pyrimidine phosphoribosyltransferase family. Xpt subfamily. As to quaternary structure, homodimer.

The protein localises to the cytoplasm. The enzyme catalyses XMP + diphosphate = xanthine + 5-phospho-alpha-D-ribose 1-diphosphate. The protein operates within purine metabolism; XMP biosynthesis via salvage pathway; XMP from xanthine: step 1/1. In terms of biological role, converts the preformed base xanthine, a product of nucleic acid breakdown, to xanthosine 5'-monophosphate (XMP), so it can be reused for RNA or DNA synthesis. This chain is Xanthine phosphoribosyltransferase, found in Lactococcus lactis subsp. cremoris (strain SK11).